Reading from the N-terminus, the 127-residue chain is Ribonuclease P protein component (127 aa).

The protein belongs to the RnpA family. As to quaternary structure, consists of a catalytic RNA component (M1 or rnpB) and a protein subunit.

The catalysed reaction is Endonucleolytic cleavage of RNA, removing 5'-extranucleotides from tRNA precursor.. Functionally, RNaseP catalyzes the removal of the 5'-leader sequence from pre-tRNA to produce the mature 5'-terminus. It can also cleave other RNA substrates such as 4.5S RNA. The protein component plays an auxiliary but essential role in vivo by binding to the 5'-leader sequence and broadening the substrate specificity of the ribozyme. The protein is Ribonuclease P protein component of Agrobacterium fabrum (strain C58 / ATCC 33970) (Agrobacterium tumefaciens (strain C58)).